The primary structure comprises 192 residues: Inner membrane protein YohD (192 aa).

At 1–40 the chain is on the periplasmic side; it reads MDLNTLISQYGYAALVIGSLAEGETVTLLGGVAAHQGLLK. Residues 41 to 61 form a helical membrane-spanning segment; it reads FPLVVLSVALGGMIGDQVLYL. Over 62-121 the chain is Cytoplasmic; that stretch reads CGRRFGGKLLRRFSKHQDKIERAQKLIQRHPYLFVIGTRFMYGFRVIGPTLIGASQLPPK. Residues 122–142 traverse the membrane as a helical segment; it reads IFLPLNILGAFAWALIFTTIG. At 143-159 the chain is on the periplasmic side; it reads YAGGQVIAPWLHNLDQH. Residues 160–180 form a helical membrane-spanning segment; the sequence is LKHWVWLILVVVLVVGVRWWL. Residues 181-192 are Cytoplasmic-facing; sequence KRRGKKKPDHQA.

This sequence belongs to the DedA family.

It localises to the cell inner membrane. The sequence is that of Inner membrane protein YohD (yohD) from Escherichia coli (strain K12).